Consider the following 1105-residue polypeptide: Ran-binding protein 6 (1105 aa).

Ala2 carries the post-translational modification N-acetylalanine. HEAT repeat units lie at residues 219–257, 361–399, 402–440, and 444–483; these read FKDF…TVPK, KVVL…GCHQ, ESIL…DFAP, and KKFH…DCPK. Residues 333-383 are ran-GTP binding; the sequence is DEMEEDDFDSNAVAAESALDRLACGLGGKVVLPMTKEHIMQMLQSPDWKYR. Residues 806–842 are a coiled coil; sequence KAKLEGHFKNQELRQVKRQEENYDQQVEMSLQDEDEC. HEAT repeat units follow at residues 866 to 905, 908 to 946, and 949 to 987; these read LPWF…HCSP, FKYV…FGGD, and RSLC…IGKI.

It belongs to the importin beta family.

It is found in the cytoplasm. Its subcellular location is the nucleus. Functionally, may function in nuclear protein import as nuclear transport receptor. The sequence is that of Ran-binding protein 6 (RANBP6) from Homo sapiens (Human).